Consider the following 61-residue polypeptide: Metallothionein-1F (61 aa).

Met1 carries the N-acetylmethionine modification. Residues 1-29 (MDPNCSCPTGGSCTCAGSCTCKACRCTSC) form a beta region. Cys5, Cys7, Cys13, Cys15, Cys19, Cys21, Cys24, Cys26, Cys29, Cys33, Cys34, Cys36, Cys37, Cys41, Cys44, Cys48, Cys50, and Cys57 together coordinate a divalent metal cation. The segment at 30–61 (KKSCCSCCPAGCAKCAQGCICKGASDKCSCCA) is alpha. At Ser58 the chain carries Phosphoserine. A divalent metal cation-binding residues include Cys59 and Cys60.

Belongs to the metallothionein superfamily. Type 1 family. In terms of assembly, monomer.

Its function is as follows. Metallothioneins have a high content of cysteine residues that bind various heavy metals; these proteins are transcriptionally regulated by both heavy metals and glucocorticoids. The protein is Metallothionein-1F (MT1F) of Sus scrofa (Pig).